We begin with the raw amino-acid sequence, 255 residues long: NAD kinase (255 aa).

Asp-44 acts as the Proton acceptor in catalysis. Residues 44-45 (DG), His-49, 114-115 (NE), Asp-144, Ala-152, 155-160 (SAYNLS), and Gln-216 each bind NAD(+).

This sequence belongs to the NAD kinase family. Requires a divalent metal cation as cofactor.

The protein resides in the cytoplasm. It catalyses the reaction NAD(+) + ATP = ADP + NADP(+) + H(+). In terms of biological role, involved in the regulation of the intracellular balance of NAD and NADP, and is a key enzyme in the biosynthesis of NADP. Catalyzes specifically the phosphorylation on 2'-hydroxyl of the adenosine moiety of NAD to yield NADP. The protein is NAD kinase of Rickettsia prowazekii (strain Madrid E).